The sequence spans 199 residues: mRNA export protein mlo3 (199 aa).

A disordered region spans residues 1-41; it reads MSMELDQSLDAIIASKPKGGIRKRRARSNKPKPTKNAKPAV. A compositionally biased stretch (basic residues) spans 19–35; it reads GGIRKRRARSNKPKPTK. Positions 55–134 constitute an RRM domain; it reads SKIIVSNLPT…RKMKVEIILD (80 aa). Residues 144–199 form a disordered region; that stretch reads ARVSPASNASATASKNGAKSSKRKTTRRRRTPNRPKKSAEELDKEMDDYFGSNEKE. Residues 148-161 show a composition bias toward polar residues; it reads PASNASATASKNGA. The segment covering 163-179 has biased composition (basic residues); sequence SSKRKTTRRRRTPNRPK.

As to quaternary structure, interacts with rpn15/dss1, mex67 and uap56.

The protein resides in the nucleus. Its function is as follows. Has a role in the mRNA export process. Interferes with mitotic chromosome segregation when overexpressed. The polypeptide is mRNA export protein mlo3 (mlo3) (Schizosaccharomyces pombe (strain 972 / ATCC 24843) (Fission yeast)).